The chain runs to 164 residues: IQ domain-containing protein F2 (164 aa).

IQ domains are found at residues 43 to 72 (RTKAAVKIQAWWRGTLVRRTLLHAALRAWI) and 99 to 128 (RERAVIKLQSLVRMWRVRWRYCQVLNAIYI).

The protein is IQ domain-containing protein F2 (IQCF2) of Homo sapiens (Human).